We begin with the raw amino-acid sequence, 1131 residues long: Probable chloride channel protein UM03490-D (1131 aa).

12 helical membrane passes run 137-157 (GVIV…SLAT), 206-226 (VTVT…PILP), 305-325 (FPAW…CAHL), 341-361 (IKCI…TLAI), 380-397 (GPAV…ASFF), 414-434 (SSAA…LFSL), 485-505 (FEIM…AFVI), 518-538 (YLVK…AFVG), 577-597 (MVNS…VSYG), 603-623 (GIFV…GILV), 643-663 (VPCI…LAGV), and 680-702 (ALTY…DWFS). 2 disordered regions span residues 815–835 (DGVE…LSVA) and 858–928 (ATGA…AGGG). Low complexity predominate over residues 866–877 (GLGSTSATGVAS). In terms of domain architecture, CBS spans 944 to 1000 (IDPTPLIVQPGMPLETVMDMFKNLGPRVILVVEYGRLSGLVTVKDVLKRIAMQEKAE). The segment covering 1061 to 1078 (RASASRGGAPGSQAGQAR) has biased composition (low complexity). A disordered region spans residues 1061-1131 (RASASRGGAP…VLGAQDDDDE (71 aa)). A compositionally biased stretch (polar residues) spans 1104–1113 (STRQTSATKN).

It belongs to the chloride channel (TC 2.A.49) family.

It is found in the membrane. Functionally, voltage-gated chloride channel. The polypeptide is Probable chloride channel protein UM03490-D (Mycosarcoma maydis (Corn smut fungus)).